The primary structure comprises 178 residues: Large ribosomal subunit protein uL6 (178 aa).

This sequence belongs to the universal ribosomal protein uL6 family. In terms of assembly, part of the 50S ribosomal subunit.

Its function is as follows. This protein binds to the 23S rRNA, and is important in its secondary structure. It is located near the subunit interface in the base of the L7/L12 stalk, and near the tRNA binding site of the peptidyltransferase center. This is Large ribosomal subunit protein uL6 from Streptococcus pneumoniae (strain ATCC 700669 / Spain 23F-1).